Reading from the N-terminus, the 117-residue chain is MPRVKRGVTSQARHKKVLKAAKGYTGRNNSCFRIAKQKVEKGLQYAYRDRKNLKREMRRLWIARINAATRLHGMSYSQFMNGLNKAGIELDRKVLSELAISEPESFGTLVEQAKAAL.

This sequence belongs to the bacterial ribosomal protein bL20 family.

Binds directly to 23S ribosomal RNA and is necessary for the in vitro assembly process of the 50S ribosomal subunit. It is not involved in the protein synthesizing functions of that subunit. This Magnetococcus marinus (strain ATCC BAA-1437 / JCM 17883 / MC-1) protein is Large ribosomal subunit protein bL20.